Consider the following 127-residue polypeptide: Protein yippee-like 4 (127 aa).

The 98-residue stretch at 27–124 (RTYSCVHCRA…IEMSHMVKDN (98 aa)) folds into the Yippee domain. Cys-31, Cys-34, Cys-87, and Cys-90 together coordinate Zn(2+). Thr-92 and Thr-93 each carry phosphothreonine. At Tyr-98 the chain carries Phosphotyrosine.

Belongs to the yippee family.

It localises to the nucleus. The protein localises to the nucleolus. This Chlorocebus aethiops (Green monkey) protein is Protein yippee-like 4 (YPEL4).